The sequence spans 335 residues: Galactosylgalactosylxylosylprotein 3-beta-glucuronosyltransferase 1 (335 aa).

Residues 1 to 6 (MPKRRD) lie on the Cytoplasmic side of the membrane. The essential for transport from endoplasmic reticulum to Golgi apparatus and interaction with SAR1A stretch occupies residues 3–5 (KRR). The chain crosses the membrane as a helical; Signal-anchor for type II membrane protein span at residues 7–27 (ILAIVLIVLPWTLLVTVWHQS). Over 28 to 335 (TIAPLLTTHK…KGFTDPTVEI (308 aa)) the chain is Lumenal. Position 92-94 (92-94 (PTY)) interacts with UDP-alpha-D-glucuronate. Residues threonine 104 and threonine 109 each carry the phosphothreonine modification. Aspartate 123 is a UDP-alpha-D-glucuronate binding site. N-linked (GlcNAc...) asparagine glycosylation is present at asparagine 141. Positions 166 and 171 each coordinate UDP-alpha-D-glucuronate. Asparagine 185 is a glycosylation site (N-linked (GlcNAc...) asparagine). 196–198 (DDD) is a binding site for UDP-alpha-D-glucuronate. Aspartate 198 contributes to the Mn(2+) binding site. The interaction with galactose moiety of substrate glycoprotein stretch occupies residues 246-255 (FDPHRPFAID). Residue glutamate 285 is the Proton donor/acceptor of the active site. N-linked (GlcNAc...) asparagine glycosylation is present at asparagine 304. Residue 312 to 314 (HTR) coordinates UDP-alpha-D-glucuronate.

This sequence belongs to the glycosyltransferase 43 family. In terms of assembly, homodimer. Interacts with SAR1A. It depends on Mn(2+) as a cofactor. Post-translationally, the soluble form derives from the membrane form by proteolytic processing.

It is found in the golgi apparatus membrane. It localises to the secreted. It carries out the reaction 3-O-(beta-D-galactosyl-(1-&gt;3)-beta-D-galactosyl-(1-&gt;4)-beta-D-xylosyl)-L-seryl-[protein] + UDP-alpha-D-glucuronate = 3-O-(beta-D-GlcA-(1-&gt;3)-beta-D-Gal-(1-&gt;3)-beta-D-Gal-(1-&gt;4)-beta-D-Xyl)-L-seryl-[protein] + UDP + H(+). The protein operates within protein modification; protein glycosylation. Functionally, involved in the biosynthesis of L2/HNK-1 carbohydrate epitope on glycoproteins. Can also play a role in glycosaminoglycan biosynthesis. Substrates include asialo-orosomucoid (ASOR), asialo-fetuin, and asialo-neural cell adhesion molecule. Requires sphingomyelin for activity: stearoyl-sphingomyelin was the most effective, followed by palmitoyl-sphingomyelin and lignoceroyl-sphingomyelin. Activity was demonstrated only for sphingomyelin with a saturated fatty acid and not for that with an unsaturated fatty acid, regardless of the length of the acyl group. In Canis lupus familiaris (Dog), this protein is Galactosylgalactosylxylosylprotein 3-beta-glucuronosyltransferase 1.